A 323-amino-acid chain; its full sequence is Global nitrogen regulator NrpRI (323 aa).

A winged helix-turn-helix region spans residues 11–76 (IEIMRVIHES…TLTDLGENEM (66 aa)). The NRD stretch occupies residues 86–323 (GFVISRIEEM…MLDYQTMKEI (238 aa)).

Belongs to the NrpR family. As to quaternary structure, forms a complex with NrpRII and the general archaeal transcription factors TBP and TFB. Interacts directly with NrpRII.

With respect to regulation, under nitrogen limitation, binding of 2-oxoglutarate to the NrpRI/NrpRII complex decreases the binding affinity of NrpRI to DNA as well as the binding affinity of NrpRII to TBP and TFB, which leads to removal of the complex from the operator, RNA polymerase recruitment and initiation of transcription. Functionally, plays a major role in nitrogen regulation. Under nitrogen sufficiency, binds to the nifH and the glnk1 promoters, leading to repression of the transcription of the genes. The polypeptide is Global nitrogen regulator NrpRI (Methanosarcina mazei (strain ATCC BAA-159 / DSM 3647 / Goe1 / Go1 / JCM 11833 / OCM 88) (Methanosarcina frisia)).